We begin with the raw amino-acid sequence, 349 residues long: MILICLCRQGFEKEVAAEITDCAAYAGIAGYVKTNADTGYVEFVLPDLDSATALFEAIRFDDLVFVRHWFVTPAIASDLPKEDRASPLMASAQALPPLAKLEPITLDTNDGKALVALTRGVTNHMRTVFKKAGAFNAKSDWVGQVLFFSGEQACIGYFPQSNGSLWVGGIPRLRAPKDAPSRATLKLEEAWHQFIPREQWDQRIAPSMRAVDLGAAPGGWTWQLVNKSMFVEAVDNGPMAENIMASGQVTHRMEDAFRFAPERAVHWLVSDIADKPARVAELITRWAENKWFKEAVFNLKLPMKKRYIELQLCSEIITLALDNAGIEYTLKFKQLYHDREEVTGHLVLF.

Residues alanine 216 to glycine 219, aspartate 235, aspartate 255, and aspartate 271 contribute to the S-adenosyl-L-methionine site. Lysine 300 (proton acceptor) is an active-site residue.

It belongs to the class I-like SAM-binding methyltransferase superfamily. RNA methyltransferase RlmE family. RlmM subfamily. As to quaternary structure, monomer.

The protein resides in the cytoplasm. It carries out the reaction cytidine(2498) in 23S rRNA + S-adenosyl-L-methionine = 2'-O-methylcytidine(2498) in 23S rRNA + S-adenosyl-L-homocysteine + H(+). Catalyzes the 2'-O-methylation at nucleotide C2498 in 23S rRNA. This is Ribosomal RNA large subunit methyltransferase M from Saccharophagus degradans (strain 2-40 / ATCC 43961 / DSM 17024).